A 317-amino-acid polypeptide reads, in one-letter code: Anamorsin homolog (317 aa).

An N-terminal SAM-like domain region spans residues M1 to A192. Residues K193–Y216 form a linker region. The [2Fe-2S] cluster site is built by C219, C226, C229, and C231. The interval C219 to C231 is fe-S binding site A. Residues C286, C289, C297, and C300 each coordinate [4Fe-4S] cluster. 2 consecutive short sequence motifs (cx2C motif) follow at residues C286–C289 and C297–C300. The segment at C286–C300 is fe-S binding site B.

Belongs to the anamorsin family. In terms of assembly, monomer. Requires [2Fe-2S] cluster as cofactor. [4Fe-4S] cluster serves as cofactor.

It localises to the cytoplasm. Its subcellular location is the mitochondrion intermembrane space. In terms of biological role, component of the cytosolic iron-sulfur (Fe-S) protein assembly (CIA) machinery. Required for the maturation of extramitochondrial Fe-S proteins. Part of an electron transfer chain functioning in an early step of cytosolic Fe-S biogenesis, facilitating the de novo assembly of a [4Fe-4S] cluster on the cytosolic Fe-S scaffold complex. Electrons are transferred from NADPH via a FAD- and FMN-containing diflavin oxidoreductase. Together with the diflavin oxidoreductase, also required for the assembly of the diferric tyrosyl radical cofactor of ribonucleotide reductase (RNR), probably by providing electrons for reduction during radical cofactor maturation in the catalytic small subunit. This chain is Anamorsin homolog, found in Theileria parva (East coast fever infection agent).